A 403-amino-acid chain; its full sequence is Peroxisomal membrane protein PEX13 (403 aa).

Pro residues predominate over residues 1–11 (MASQPPPPPKP). The tract at residues 1-69 (MASQPPPPPK…SQQTGSGNLN (69 aa)) is disordered. At 1-134 (MASQPPPPPK…SSRGAFQSIE (134 aa)) the chain is on the peroxisomal matrix side. The span at 59–69 (PSQQTGSGNLN) shows a compositional bias: polar residues. Residues 135-155 (SIVHAFASVSMMMDATFSAVY) form a helical membrane-spanning segment. Positions 145–233 (MMMDATFSAV…EDRAANSAKS (89 aa)) are targeting to peroxisomes. The Cytoplasmic portion of the chain corresponds to 156 to 174 (NSFRAVLDVANHFSRLKIH). A helical membrane pass occupies residues 175-192 (FTKVFSAFALVRTIRYLY). The interval 175–196 (FTKVFSAFALVRTIRYLYRRLQ) is interaction with PEX19. Residues 193–233 (RRLQWMIGLRRGLENEDLWAESEGTVACLGAEDRAANSAKS) lie on the Peroxisomal matrix side of the membrane. The chain crosses the membrane as a helical span at residues 234-254 (WPIFLFFAVILGGPYLIWKLL). Residues 255 to 403 (STHSDEVTDS…TGKNGDKQDL (149 aa)) are Cytoplasmic-facing. Residues 272-336 (DDHVVARAEY…PANYVKILGK (65 aa)) form the SH3 domain. Residue serine 354 is modified to Phosphoserine.

It belongs to the peroxin-13 family. Interacts (via SH3 domain) with PEX14 (via SH3-binding motif); forming the PEX13-PEX14 docking complex. Interacts with PEX19.

The protein resides in the peroxisome membrane. Functionally, component of the PEX13-PEX14 docking complex, a translocon channel that specifically mediates the import of peroxisomal cargo proteins bound to PEX5 receptor. The PEX13-PEX14 docking complex forms a large import pore which can be opened to a diameter of about 9 nm. Mechanistically, PEX5 receptor along with cargo proteins associates with the PEX14 subunit of the PEX13-PEX14 docking complex in the cytosol, leading to the insertion of the receptor into the organelle membrane with the concomitant translocation of the cargo into the peroxisome matrix. Involved in the import of PTS1- and PTS2-type containing proteins. This Bos taurus (Bovine) protein is Peroxisomal membrane protein PEX13 (PEX13).